A 354-amino-acid polypeptide reads, in one-letter code: Galactoside alpha-(1,2)-fucosyltransferase 2 (354 aa).

Residues 1–22 (MRFAPDYVLCPPTATRRLRATH) are Cytoplasmic-facing. Residues 23 to 43 (PSVSTIYFLFTIFVVSTVFHC) form a helical; Signal-anchor for type II membrane protein membrane-spanning segment. The Lumenal segment spans residues 44 to 354 (HQRLALVPAP…NMGRALWSGL (311 aa)). Residues asparagine 197, asparagine 291, and asparagine 317 are each glycosylated (N-linked (GlcNAc...) asparagine).

This sequence belongs to the glycosyltransferase 11 family. As to expression, salivary and lactating mammary glands.

The protein resides in the golgi apparatus. It localises to the golgi stack membrane. It catalyses the reaction a beta-D-galactosyl-(1-&gt;3)-N-acetyl-beta-D-glucosaminyl derivative + GDP-beta-L-fucose = an alpha-L-Fuc-(1-&gt;2)-beta-D-Gal-(1-&gt;3)-beta-D-GlcNAc derivative + GDP + H(+). The enzyme catalyses a beta-D-galactosyl-(1-&gt;4)-N-acetyl-beta-D-glucosaminyl derivative + GDP-beta-L-fucose = an alpha-L-Fuc-(1-&gt;2)-beta-D-Gal-(1-&gt;4)-beta-D-GlcNAc derivative + GDP + H(+). The catalysed reaction is a neolactoside nLc4Cer + GDP-beta-L-fucose = a neolactoside IV(2)-alpha-Fuc-nLc4Cer + GDP + H(+). It carries out the reaction a neolactoside nLc4Cer(d18:1(4E)) + GDP-beta-L-fucose = a neolactoside IV(2)-alpha-Fuc-nLc4Cer(d18:1(4E)) + GDP + H(+). It catalyses the reaction a ganglioside GM1 + GDP-beta-L-fucose = a ganglioside Fuc-GM1 + GDP + H(+). The enzyme catalyses a ganglioside GA1 + GDP-beta-L-fucose = a ganglioside Fuc-GA1 + GDP + H(+). The catalysed reaction is Lc4Cer + GDP-beta-L-fucose = alpha-L-fucosyl-(1-&gt;2)-beta-D-galactosyl-(1-&gt;3)-N-acetyl-beta-D-glucosaminyl-(1-&gt;3)-beta-D-galactosyl-(1-&gt;4)-beta-D-glucosyl-(1&lt;-&gt;1')-ceramide + GDP + H(+). It carries out the reaction a beta-D-Gal-(1-&gt;3)-beta-D-GlcNAc-(1-&gt;3)-beta-D-Gal-(1-&gt;4)-beta-D-Glc-(1&lt;-&gt;1')-Cer(d18:1(4E)) + GDP-beta-L-fucose = alpha-L-fucosyl-(1-&gt;2)- beta-D-galactosyl-(1-&gt;3)-N-acetyl-beta-D-glucosaminyl-(1-&gt;3)-beta-D-galactosyl-(1-&gt;4)-beta-D-glucosyl-(1&lt;-&gt;1')-N-acylsphing-4-enine + GDP + H(+). It catalyses the reaction a ganglioside GD1b + GDP-beta-L-fucose = a ganglioside Fuc-GD1b + GDP + H(+). The enzyme catalyses a ganglioside GM1 (d18:1(4E)) + GDP-beta-L-fucose = a ganglioside Fuc-GM1 (d18:1(4E)) + GDP + H(+). The catalysed reaction is a globoside GalGb4Cer (d18:1(4E)) + GDP-beta-L-fucose = a globoside Globo-H (d18:1(4E)) + GDP + H(+). It carries out the reaction a lactoside III(4)-a-Fuc-Lc4Cer + GDP-beta-L-fucose = a lactoside IV(2),III(4)-a-[Fuc]2-Lc4Cer + GDP + H(+). It catalyses the reaction beta-D-galactosyl-(1-&gt;3)-N-acetyl-D-galactosamine + GDP-beta-L-fucose = alpha-L-fucosyl-(1-&gt;2)-beta-D-galactosyl-(1-&gt;3)-N-acetyl-D-galactosamine + GDP + H(+). The protein operates within protein modification; protein glycosylation. Functionally, catalyzes the transfer of L-fucose, from a guanosine diphosphate-beta-L-fucose, to the terminal galactose on both O- and N-linked glycans chains of cell surface glycoproteins and glycolipids and the resulting epitope regulates several processes such as cell-cell interaction including host-microbe interaction, cell surface expression and cell proliferation. Preferentially fucosylates gangliosides GA1 and GM1 in the antrum, cecum and colon and in the female reproductive organs. Fucosylated host glycoproteins or glycolipids mediate interaction with intestinal microbiota influencing its composition. Creates a soluble precursor oligosaccharide FuC-alpha ((1,2)Galbeta-) called the H antigen which is an essential substrate for the final step in the soluble ABO blood group antigen synthesis pathway. In Oryctolagus cuniculus (Rabbit), this protein is Galactoside alpha-(1,2)-fucosyltransferase 2.